The sequence spans 132 residues: Ribosome-binding factor A (132 aa).

This sequence belongs to the RbfA family. In terms of assembly, monomer. Binds 30S ribosomal subunits, but not 50S ribosomal subunits or 70S ribosomes.

Its subcellular location is the cytoplasm. Functionally, one of several proteins that assist in the late maturation steps of the functional core of the 30S ribosomal subunit. Associates with free 30S ribosomal subunits (but not with 30S subunits that are part of 70S ribosomes or polysomes). Required for efficient processing of 16S rRNA. May interact with the 5'-terminal helix region of 16S rRNA. The protein is Ribosome-binding factor A of Prochlorococcus marinus subsp. pastoris (strain CCMP1986 / NIES-2087 / MED4).